The primary structure comprises 382 residues: MSNSRNIVIVGGGITGVSCLYFLAHHPSFNRDRDTITLFESAGIASAASGKASGFLSLEWHGPSTSSLAALSYNLHKELSDQYDGVNKWGYRALDTWSIKADENCQQPDKLPEGIEWIAPSIVENVTRLGNKKNSGQVHPYKFCHAIYEEASKVANVTLVKGHVLSVDENEVEYRLIGDDYAPDEEEEITSAEELHTIHSMEATHIIVAAGPWTPQLIPNLRISGARIHSITIDLPIKLNGNAVFSEITYKDGTIAAPEFYAREDELYVCGEFDDEPLPELSSDTKVDQDKCALIKQCANHFHQIIRDSPVKVRQACYLPISNATGAPVIGKIGSSIYVAAAHGCWGITLGPGTGKVLSELILDGAVTSANIDLLDPEGSLE.

The helical transmembrane segment at 7–27 threads the bilayer; sequence IVIVGGGITGVSCLYFLAHHP.

This sequence belongs to the TDA3 family.

The protein localises to the cytoplasm. It is found in the membrane. In terms of biological role, putative oxidoreductase that negatively regulates the retrieval of cargo from late endosomes to the Golgi. In Schizosaccharomyces pombe (strain 972 / ATCC 24843) (Fission yeast), this protein is Putative oxidoreductase C1F5.03c.